The sequence spans 235 residues: MNIRNARPEDLMNMQHCNLLCLPENYQMKYYFYHGLSWPQLSYIAEDENGKIVGYVLAKMEEDPDDVPHGHITSLAVKRSHRRLGLAQKLMDQASRAMIENFNAKYVSLHVRKSNRAALHLYSNTLNFQISEVEPKYYADGEDAYAMKRDLTQMADELRRHLELKEKGKHMVLAALENKAENKGNVLLSSGEACREEKGLAAEDSGGDSKDLSEVSETTESTDVKDSSEASDSAS.

At M1 the chain carries N-acetylmethionine. The tract at residues 1–58 (MNIRNARPEDLMNMQHCNLLCLPENYQMKYYFYHGLSWPQLSYIAEDENGKIVGYVLA) is interaction with NAA15. The region spanning 1–152 (MNIRNARPED…DAYAMKRDLT (152 aa)) is the N-acetyltransferase domain. K136 is modified (N6-acetyllysine; by autocatalysis). Basic and acidic residues predominate over residues 196-213 (EEKGLAAEDSGGDSKDLS). Residues 196–235 (EEKGLAAEDSGGDSKDLSEVSETTESTDVKDSSEASDSAS) form a disordered region. A Phosphoserine modification is found at S205. The residue at position 209 (S209) is a Phosphoserine; by IKKB. 2 positions are modified to phosphoserine: S213 and S216.

Belongs to the acetyltransferase family. ARD1 subfamily. As to quaternary structure, component of the N-terminal acetyltransferase A complex (also called the NatA complex) composed of NAA10 and NAA15. Interacts with NAA15. Component of the N-terminal acetyltransferase A (NatA)/HYPK complex at least composed of NAA10, NAA15 and HYPK, which has N-terminal acetyltransferase activity. In complex with NAA15, interacts with HYPK. Component of the N-terminal acetyltransferase E (NatE) complex at least composed of NAA10, NAA15 and NAA50. Within the complex interacts with NAA15; the interaction is required for binding to NAAT50. Interacts with NAAT50. The interaction of the NatA complex with NAA50 reduces the acetylation activity of the NatA complex. Component of the N-terminal acetyltransferase E (NatE)/HYPK complex at least composed of NAA10, NAA15, NAA50 and HYPK. In complex with NAA15, interacts with HYPK; the interaction with HYPK reduces the capacity of the NatA complex to interact with NAA50. Interacts with HIF1A (via its ODD domain); the interaction increases HIF1A protein stability during normoxia, an down-regulates it when induced by hypoxia. Interacts with the ribosome. Binds to MYLK. Interacts with NAA16. Interacts (via its C-terminal domain) with TSC2, leading to its acetylation. Interacts with IKBKB. Interacts with HSPA1A and HSPA1B leading to its acetylation. Cleaved by caspases during apoptosis. Post-translationally, phosphorylation by IKBKB/IKKB at Ser-209 destabilises NAA10 and promotes its proteasome-mediated degradation. In terms of processing, autoacetylated at Lys-136 which stimulates its catalytic activity. In terms of tissue distribution, ubiquitous.

Its subcellular location is the cytoplasm. The protein resides in the nucleus. It carries out the reaction N-terminal glycyl-[protein] + acetyl-CoA = N-terminal N(alpha)-acetylglycyl-[protein] + CoA + H(+). The catalysed reaction is N-terminal L-alanyl-[protein] + acetyl-CoA = N-terminal N(alpha)-acetyl-L-alanyl-[protein] + CoA + H(+). It catalyses the reaction N-terminal L-seryl-[protein] + acetyl-CoA = N-terminal N(alpha)-acetyl-L-seryl-[protein] + CoA + H(+). The enzyme catalyses N-terminal L-valyl-[protein] + acetyl-CoA = N-terminal N(alpha)-acetyl-L-valyl-[protein] + CoA + H(+). It carries out the reaction N-terminal L-cysteinyl-[protein] + acetyl-CoA = N-terminal N(alpha)-acetyl-L-cysteinyl-[protein] + CoA + H(+). The catalysed reaction is N-terminal L-threonyl-[protein] + acetyl-CoA = N-terminal N(alpha)-acetyl-L-threonyl-[protein] + CoA + H(+). In terms of biological role, catalytic subunit of the N-terminal acetyltransferase A (NatA) complex which displays alpha (N-terminal) acetyltransferase activity. Acetylates amino termini that are devoid of initiator methionine. The alpha (N-terminal) acetyltransferase activity may be important for vascular, hematopoietic and neuronal growth and development. Without NAA15, displays epsilon (internal) acetyltransferase activity towards HIF1A, thereby promoting its degradation. Represses MYLK kinase activity by acetylation, and thus represses tumor cell migration. Acetylates, and stabilizes TSC2, thereby repressing mTOR activity and suppressing cancer development. Acetylates HSPA1A and HSPA1B at 'Lys-77' which enhances its chaperone activity and leads to preferential binding to co-chaperone HOPX. Acetylates HIST1H4A. Acts as a negative regulator of sister chromatid cohesion during mitosis. This chain is N-alpha-acetyltransferase 10 (Naa10), found in Mus musculus (Mouse).